A 360-amino-acid chain; its full sequence is Photosystem II protein D1 (360 aa).

Helical transmembrane passes span 29 to 46 (YIGWFGVLMIPTLLTATS), 118 to 133 (HFLTGVACYIGREWEL), and 142 to 156 (WISVAFTAPVAAAAA). A chlorophyll a-binding site is contributed by His118. Tyr126 lines the pheophytin a pocket. Residues Asp170 and Glu189 each coordinate [CaMn4O5] cluster. A helical membrane pass occupies residues 197–218 (FHQLGVAGVFGGSLFSAMHGSL). Residue His198 coordinates chlorophyll a. Residues His215 and 264–265 (SF) each bind a quinone. Residue His215 participates in Fe cation binding. His272 provides a ligand contact to Fe cation. A helical membrane pass occupies residues 274–288 (FLGLWPVVGIWLTAL). His332, Glu333, Asp342, and Ala344 together coordinate [CaMn4O5] cluster. Positions 345–360 (SGESLPVALTAPAVNG) are excised as a propeptide.

Belongs to the reaction center PufL/M/PsbA/D family. As to quaternary structure, PSII is composed of 1 copy each of membrane proteins PsbA, PsbB, PsbC, PsbD, PsbE, PsbF, PsbH, PsbI, PsbJ, PsbK, PsbL, PsbM, PsbT, PsbX, PsbY, PsbZ, Psb30/Ycf12, at least 3 peripheral proteins of the oxygen-evolving complex and a large number of cofactors. It forms dimeric complexes. The D1/D2 heterodimer binds P680, chlorophylls that are the primary electron donor of PSII, and subsequent electron acceptors. It shares a non-heme iron and each subunit binds pheophytin, quinone, additional chlorophylls, carotenoids and lipids. D1 provides most of the ligands for the Mn4-Ca-O5 cluster of the oxygen-evolving complex (OEC). There is also a Cl(-1) ion associated with D1 and D2, which is required for oxygen evolution. The PSII complex binds additional chlorophylls, carotenoids and specific lipids. serves as cofactor. Tyr-161 forms a radical intermediate that is referred to as redox-active TyrZ, YZ or Y-Z. In terms of processing, C-terminally processed by CTPA; processing is essential to allow assembly of the oxygen-evolving complex and thus photosynthetic growth.

The protein localises to the plastid. It localises to the chloroplast thylakoid membrane. The catalysed reaction is 2 a plastoquinone + 4 hnu + 2 H2O = 2 a plastoquinol + O2. Its function is as follows. Photosystem II (PSII) is a light-driven water:plastoquinone oxidoreductase that uses light energy to abstract electrons from H(2)O, generating O(2) and a proton gradient subsequently used for ATP formation. It consists of a core antenna complex that captures photons, and an electron transfer chain that converts photonic excitation into a charge separation. The D1/D2 (PsbA/PsbD) reaction center heterodimer binds P680, the primary electron donor of PSII as well as several subsequent electron acceptors. This is Photosystem II protein D1 from Porphyra purpurea (Red seaweed).